The chain runs to 454 residues: Phosphoglucosamine mutase (454 aa).

S104 serves as the catalytic Phosphoserine intermediate. Mg(2+) is bound by residues S104, D241, D243, and D245. At S104 the chain carries Phosphoserine.

This sequence belongs to the phosphohexose mutase family. It depends on Mg(2+) as a cofactor. Post-translationally, activated by phosphorylation.

It catalyses the reaction alpha-D-glucosamine 1-phosphate = D-glucosamine 6-phosphate. Catalyzes the conversion of glucosamine-6-phosphate to glucosamine-1-phosphate. This Paenarthrobacter aurescens (strain TC1) protein is Phosphoglucosamine mutase.